We begin with the raw amino-acid sequence, 214 residues long: Ribosomal protein uL16-like (214 aa).

This sequence belongs to the universal ribosomal protein uL16 family. As to quaternary structure, component of a male germ cell-specific 60S large ribosomal subunit (LSU), which contains RPL10L and RPL39L, instead of RPL10 and RPL39 paralogs. The composition of the rest of the complex is similar to classical ribosomes. As to expression, almost testis-specific. Also expressed in pre- and postmenopausal ovary.

Its subcellular location is the cytoplasm. In terms of biological role, testis-specific component of the ribosome, which is required for the transition from prophase to metaphase in male meiosis I. Compensates for the inactivated X-linked RPL10 paralog during spermatogenesis. The ribosome is a large ribonucleoprotein complex responsible for the synthesis of proteins in the cell. The male germ cell-specific ribosome displays a ribosomal polypeptide exit tunnel of distinct size and charge states compared with the classical ribosome. It is responsible for regulating the biosynthesis and folding of a subset of male germ-cell-specific proteins that are essential for the formation of sperm. This is Ribosomal protein uL16-like from Homo sapiens (Human).